Consider the following 304-residue polypeptide: MKYKIIYMGTPHYAREILQTLVEAEDMDVSLVLTQPDRPVGRKKVLTPPPVKVLAQEHGIDVLQPNRLSEEGIKEAIKSQNPDFIIVAAFGQILPQSILDIAPCINLHASLLPQYRGASPVQQSLLNGDEKTGVTSMLMEAGLDTGPMLEKIEFVIPKEMRLFALMEQLTRDACMLTLSTVRNFETITPEAQDESQASLCKKIKKSDGQIDFEDAEIIYNKYRAFEGWPGIFAVNGTKFDEVILLESGTTHTAGEILSFDEESVLVGCSRGALKIGILQPASKKVMTARAYCVGRGKKVGDNIL.

110-113 contacts (6S)-5,6,7,8-tetrahydrofolate; sequence SLLP.

It belongs to the Fmt family.

The catalysed reaction is L-methionyl-tRNA(fMet) + (6R)-10-formyltetrahydrofolate = N-formyl-L-methionyl-tRNA(fMet) + (6S)-5,6,7,8-tetrahydrofolate + H(+). Its function is as follows. Attaches a formyl group to the free amino group of methionyl-tRNA(fMet). The formyl group appears to play a dual role in the initiator identity of N-formylmethionyl-tRNA by promoting its recognition by IF2 and preventing the misappropriation of this tRNA by the elongation apparatus. In Sulfurovum sp. (strain NBC37-1), this protein is Methionyl-tRNA formyltransferase.